A 171-amino-acid chain; its full sequence is Calcium channel flower homolog (171 aa).

Residues Met-1 to Arg-31 are Cytoplasmic-facing. The helical transmembrane segment at Leu-32–Ile-52 threads the bilayer. Over His-53–Asn-56 the chain is Extracellular. A helical membrane pass occupies residues Ile-57–Phe-77. The Cytoplasmic portion of the chain corresponds to Cys-78–Ala-101. Residues Val-102–Leu-122 form a helical membrane-spanning segment. Topologically, residues Gly-123–Asn-124 are extracellular. Residues Ala-125–Lys-141 traverse the membrane as a helical segment. The Cytoplasmic portion of the chain corresponds to Lys-142–Leu-171.

Belongs to the calcium channel flower family. Interacts with adaptor protein complex 2 (AP-2). As to expression, expressed in calyces in the brain (at protein level). Detected in cultured hippocampal neurons (at protein level).

It localises to the cell membrane. The protein localises to the cytoplasmic vesicle. Its subcellular location is the secretory vesicle. It is found in the synaptic vesicle. The protein resides in the golgi apparatus. It localises to the vesicle. Functionally, transmembrane protein which mediates synaptic endocytosis and fitness-based cell culling. In response to different stimulus strengths, controls two major modes of synaptic vesicle (SV) retrieval in hippocampal neurons; Clathrin-mediated endocytosis (CME) in response to mild stimulation and activity-dependent bulk endocytosis (ADBE) in response to strong stimulation. In cytotoxic T-lymphoocytes (CTLs) facilitates calcium-dependent endocytosis of cytotoxic granules (CGs) at the immuno synapse. Different isoforms work as fitness fingerprints in 'loser' and 'winner' cells and thereby mediate win/lose decisions as part of the cell competition process. The polypeptide is Calcium channel flower homolog (Cacfd1) (Rattus norvegicus (Rat)).